The primary structure comprises 123 residues: Large ribosomal subunit protein bL21 (123 aa).

The protein belongs to the bacterial ribosomal protein bL21 family. In terms of assembly, part of the 50S ribosomal subunit. Contacts protein L20.

Functionally, this protein binds to 23S rRNA in the presence of protein L20. The polypeptide is Large ribosomal subunit protein bL21 (Rhizobium meliloti (strain 1021) (Ensifer meliloti)).